The following is a 523-amino-acid chain: Translation initiation factor eIF2B subunit delta (523 aa).

The interval methionine 1–leucine 154 is disordered. Alanine 2 is subject to N-acetylalanine. At serine 12 the chain carries Phosphoserine. A compositionally biased stretch (basic and acidic residues) spans methionine 31 to arginine 40. The segment covering lysine 41–lysine 51 has biased composition (basic residues). Threonine 85 carries the post-translational modification Phosphothreonine. The segment covering threonine 95 to glutamate 120 has biased composition (basic and acidic residues). Serine 129 bears the Phosphoserine mark. The interval arginine 170–leucine 179 is may bind the chemical integrated stress response (ISR) inhibitor ISRIB.

It belongs to the eIF-2B alpha/beta/delta subunits family. Component of the translation initiation factor 2B (eIF2B) complex which is a heterodecamer of two sets of five different subunits: alpha, beta, gamma, delta and epsilon. Subunits alpha, beta and delta comprise a regulatory subcomplex and subunits epsilon and gamma comprise a catalytic subcomplex. Within the complex, the hexameric regulatory complex resides at the center, with the two heterodimeric catalytic subcomplexes bound on opposite sides.

The protein localises to the cytoplasm. The protein resides in the cytosol. Its activity is regulated as follows. Activated by the chemical integrated stress response (ISR) inhibitor ISRIB which stimulates guanine nucleotide exchange factor activity for both phosphorylated and unphosphorylated eIF2. Acts as a component of the translation initiation factor 2B (eIF2B) complex, which catalyzes the exchange of GDP for GTP on eukaryotic initiation factor 2 (eIF2) gamma subunit. Its guanine nucleotide exchange factor activity is repressed when bound to eIF2 complex phosphorylated on the alpha subunit, thereby limiting the amount of methionyl-initiator methionine tRNA available to the ribosome and consequently global translation is repressed. The sequence is that of Translation initiation factor eIF2B subunit delta (EIF2B4) from Oryctolagus cuniculus (Rabbit).